The chain runs to 330 residues: DNA-directed RNA polymerase subunit alpha (330 aa).

The interval 1–231 (MALFNFQKPD…IHHFMLFSDE (231 aa)) is alpha N-terminal domain (alpha-NTD). Positions 253 to 330 (MRQLLKTKLV…DLAKYKLDKE (78 aa)) are alpha C-terminal domain (alpha-CTD).

This sequence belongs to the RNA polymerase alpha chain family. Homodimer. The RNAP catalytic core consists of 2 alpha, 1 beta, 1 beta' and 1 omega subunit. When a sigma factor is associated with the core the holoenzyme is formed, which can initiate transcription.

The enzyme catalyses RNA(n) + a ribonucleoside 5'-triphosphate = RNA(n+1) + diphosphate. In terms of biological role, DNA-dependent RNA polymerase catalyzes the transcription of DNA into RNA using the four ribonucleoside triphosphates as substrates. The polypeptide is DNA-directed RNA polymerase subunit alpha (Flavobacterium psychrophilum (strain ATCC 49511 / DSM 21280 / CIP 103535 / JIP02/86)).